The following is a 228-amino-acid chain: Urease accessory protein UreH (228 aa).

5 helical membrane passes run 48-68 (VFWG…IILM), 79-99 (SLEF…ILSL), 130-150 (LFIG…LTMS), 162-182 (ILFF…LIGI), and 196-216 (AFIQ…MYNL).

This sequence belongs to the NiCoT transporter (TC 2.A.52) family.

Its subcellular location is the cell membrane. Functionally, probably facilitates nickel incorporation. May constitute a multicomponent high-affinity nickel transporter. Not essential for the expression of catalytically active urease. This is Urease accessory protein UreH (ureH) from Bacillus sp. (strain TB-90).